Consider the following 302-residue polypeptide: uncharacterized protein (302 aa).

This is an uncharacterized protein from Haemophilus influenzae (strain ATCC 51907 / DSM 11121 / KW20 / Rd).